A 260-amino-acid chain; its full sequence is MAMTRSLEVKGQLVAGGKEPLICAPLVGRDEAAVLRELEVIVAKRPDLLEWRVDFYSGISDVERVVELAKEIRRSSAGIPVIFTRRSTREGGEPIGLSEDEVLSMYRAVARSGAVDFLDYELSSQPEHFEQAVALARETDTKLIASFHDFGKTPPVDEIVAKLVAMEEAGADIAKVAVMPQGLEDVLTLLQATLEAQKKIRLPVISMSMGAYGSLSRLFGWVFGSSVSFAVGQQASAPGQVPIEDLRTVLEVLQRSLKGE.

Residues 50 to 52 (EWR) and Arg86 each bind 3-dehydroquinate. His148 (proton donor/acceptor) is an active-site residue. Catalysis depends on Lys175, which acts as the Schiff-base intermediate with substrate. Residues Arg217, Ser236, and Gln240 each coordinate 3-dehydroquinate.

The protein belongs to the type-I 3-dehydroquinase family. As to quaternary structure, homodimer.

It catalyses the reaction 3-dehydroquinate = 3-dehydroshikimate + H2O. Its pathway is metabolic intermediate biosynthesis; chorismate biosynthesis; chorismate from D-erythrose 4-phosphate and phosphoenolpyruvate: step 3/7. Involved in the third step of the chorismate pathway, which leads to the biosynthesis of aromatic amino acids. Catalyzes the cis-dehydration of 3-dehydroquinate (DHQ) and introduces the first double bond of the aromatic ring to yield 3-dehydroshikimate. The sequence is that of 3-dehydroquinate dehydratase from Aromatoleum aromaticum (strain DSM 19018 / LMG 30748 / EbN1) (Azoarcus sp. (strain EbN1)).